Consider the following 183-residue polypeptide: Adenine phosphoribosyltransferase (183 aa).

It belongs to the purine/pyrimidine phosphoribosyltransferase family. In terms of assembly, homodimer.

It is found in the cytoplasm. The enzyme catalyses AMP + diphosphate = 5-phospho-alpha-D-ribose 1-diphosphate + adenine. It functions in the pathway purine metabolism; AMP biosynthesis via salvage pathway; AMP from adenine: step 1/1. In terms of biological role, catalyzes a salvage reaction resulting in the formation of AMP, that is energically less costly than de novo synthesis. The sequence is that of Adenine phosphoribosyltransferase from Salmonella heidelberg (strain SL476).